Reading from the N-terminus, the 113-residue chain is Iron-sulfur cluster insertion protein ErpA (113 aa).

Positions 41, 105, and 107 each coordinate iron-sulfur cluster.

The protein belongs to the HesB/IscA family. In terms of assembly, homodimer. The cofactor is iron-sulfur cluster.

Required for insertion of 4Fe-4S clusters for at least IspG. The polypeptide is Iron-sulfur cluster insertion protein ErpA (Colwellia psychrerythraea (strain 34H / ATCC BAA-681) (Vibrio psychroerythus)).